The primary structure comprises 200 residues: Small ribosomal subunit protein uS4 (200 aa).

The S4 RNA-binding domain occupies 106 to 170 (RRLQTIVFKK…SPIANELHPI (65 aa)). The segment at 178–200 (AERVKEEAEKEAAASEDGGEQDE) is disordered. Over residues 179 to 190 (ERVKEEAEKEAA) the composition is skewed to basic and acidic residues.

Belongs to the universal ribosomal protein uS4 family. Part of the 30S ribosomal subunit. Contacts protein S5. The interaction surface between S4 and S5 is involved in control of translational fidelity.

Its function is as follows. One of the primary rRNA binding proteins, it binds directly to 16S rRNA where it nucleates assembly of the body of the 30S subunit. Functionally, with S5 and S12 plays an important role in translational accuracy. The sequence is that of Small ribosomal subunit protein uS4 from Thermoplasma volcanium (strain ATCC 51530 / DSM 4299 / JCM 9571 / NBRC 15438 / GSS1).